A 626-amino-acid chain; its full sequence is Glyco-Gag protein (626 aa).

The Cytoplasmic portion of the chain corresponds to 1–66; the sequence is LGDVPGTSGA…SVWNRSRAAR (66 aa). Residues 67 to 86 traverse the membrane as a helical segment; the sequence is LVCCSIVLCCLCLTVFLYLS. Residues 87–626 are Extracellular-facing; that stretch reads ENMGQAVTTP…PQASLLTLDD (540 aa). A glycan (N-linked (GlcNAc...) asparagine; by host) is linked at Asn113. 2 stretches are compositionally biased toward pro residues: residues 198–212 and 249–261; these read PPSA…PLST and DPPP…PPSP. 2 disordered regions span residues 198–306 and 522–626; these read PPSA…FPLR and RETP…TLDD. Composition is skewed to basic and acidic residues over residues 522–554 and 574–607; these read RETP…EKER and RQDR…DCPK. Positions 526-566 form a coiled coil; that stretch reads EEREERIRRETEEKEERRRAEDVQREKERDRRRHREMSKLL. The CCHC-type zinc finger occupies 590–607; the sequence is DQCAYCKEKGHWARDCPK.

Glycosylated by host. In terms of processing, cleaved by host near the middle of the molecule, releasing the c-terminal half containing capsid and nucleoprotein domains op GAG.

It is found in the host cell membrane. In terms of biological role, plays a role in viral particle release. Presumably acts by facilitating the fission of the virion bud at the cell surface. May prevent the antiviral activity of murine APOBEC3. This chain is Glyco-Gag protein, found in Mus musculus (Mouse).